Here is a 253-residue protein sequence, read N- to C-terminus: Chitooligosaccharide deacetylase (253 aa).

Residues histidine 61 and histidine 126 each coordinate Mg(2+).

Belongs to the YdjC deacetylase family. ChbG subfamily. In terms of assembly, homodimer. Requires Mg(2+) as cofactor.

The protein localises to the cytoplasm. The catalysed reaction is N,N'-diacetylchitobiose + H2O = N-acetyl-beta-D-glucosaminyl-(1-&gt;4)-D-glucosamine + acetate. It catalyses the reaction diacetylchitobiose-6'-phosphate + H2O = N'-monoacetylchitobiose-6'-phosphate + acetate. The protein operates within glycan degradation; chitin degradation. In terms of biological role, involved in the degradation of chitin. ChbG is essential for growth on the acetylated chitooligosaccharides chitobiose and chitotriose but is dispensable for growth on cellobiose and chitosan dimer, the deacetylated form of chitobiose. Deacetylation of chitobiose-6-P and chitotriose-6-P is necessary for both the activation of the chb promoter by the regulatory protein ChbR and the hydrolysis of phosphorylated beta-glucosides by the phospho-beta-glucosidase ChbF. Catalyzes the removal of only one acetyl group from chitobiose-6-P to yield monoacetylchitobiose-6-P, the inducer of ChbR and the substrate of ChbF. The protein is Chitooligosaccharide deacetylase of Yersinia pestis bv. Antiqua (strain Angola).